The following is a 335-amino-acid chain: Glycerol-3-phosphate dehydrogenase [NAD(P)+] (335 aa).

Residues Ser12, Trp13, and Lys107 each contribute to the NADPH site. Residues Lys107, Gly138, and Ser140 each contribute to the sn-glycerol 3-phosphate site. Residue Ala142 participates in NADPH binding. Sn-glycerol 3-phosphate contacts are provided by Lys193, Asp246, Ser256, Arg257, and Asn258. The Proton acceptor role is filled by Lys193. Arg257 is an NADPH binding site. The NADPH site is built by Val281 and Glu283.

It belongs to the NAD-dependent glycerol-3-phosphate dehydrogenase family.

Its subcellular location is the cytoplasm. The catalysed reaction is sn-glycerol 3-phosphate + NAD(+) = dihydroxyacetone phosphate + NADH + H(+). The enzyme catalyses sn-glycerol 3-phosphate + NADP(+) = dihydroxyacetone phosphate + NADPH + H(+). The protein operates within membrane lipid metabolism; glycerophospholipid metabolism. Catalyzes the reduction of the glycolytic intermediate dihydroxyacetone phosphate (DHAP) to sn-glycerol 3-phosphate (G3P), the key precursor for phospholipid synthesis. In Geobacter sp. (strain M21), this protein is Glycerol-3-phosphate dehydrogenase [NAD(P)+].